A 262-amino-acid chain; its full sequence is Indole-3-glycerol phosphate synthase (262 aa).

Belongs to the TrpC family.

It catalyses the reaction 1-(2-carboxyphenylamino)-1-deoxy-D-ribulose 5-phosphate + H(+) = (1S,2R)-1-C-(indol-3-yl)glycerol 3-phosphate + CO2 + H2O. The protein operates within amino-acid biosynthesis; L-tryptophan biosynthesis; L-tryptophan from chorismate: step 4/5. The polypeptide is Indole-3-glycerol phosphate synthase (Clostridium acetobutylicum (strain ATCC 824 / DSM 792 / JCM 1419 / IAM 19013 / LMG 5710 / NBRC 13948 / NRRL B-527 / VKM B-1787 / 2291 / W)).